A 371-amino-acid chain; its full sequence is 4-hydroxyphenylpyruvate dioxygenase-like protein (371 aa).

2 VOC domains span residues 7–135 (RLCH…LLQR) and 160–328 (HVDH…VFTK). Fe cation-binding residues include H163, H258, and E339.

Belongs to the 4HPPD family. Requires Fe cation as cofactor.

The protein localises to the mitochondrion. The enzyme catalyses 3-(4-hydroxyphenyl)pyruvate + O2 = (S)-4-hydroxymandelate + CO2. In terms of biological role, iron-dependent dioxygenase that catalyzes the conversion of 4-hydroxyphenylpyruvate (4-HPPA) to 4-hydroxymandelate (4-HMA) in the mitochondria, one of the steps in the biosynthesis of coenzyme Q10 from tyrosine. The sequence is that of 4-hydroxyphenylpyruvate dioxygenase-like protein from Rattus norvegicus (Rat).